The following is a 370-amino-acid chain: Spermidine/putrescine import ATP-binding protein PotA (370 aa).

The 231-residue stretch at 11-241 (IELRSITKSY…PKNLFVAKFI (231 aa)) folds into the ABC transporter domain. An ATP-binding site is contributed by 43–50 (GPSGCGKT).

The protein belongs to the ABC transporter superfamily. Spermidine/putrescine importer (TC 3.A.1.11.1) family. In terms of assembly, the complex is composed of two ATP-binding proteins (PotA), two transmembrane proteins (PotB and PotC) and a solute-binding protein (PotD).

It is found in the cell inner membrane. It catalyses the reaction ATP + H2O + polyamine-[polyamine-binding protein]Side 1 = ADP + phosphate + polyamineSide 2 + [polyamine-binding protein]Side 1.. In terms of biological role, part of the ABC transporter complex PotABCD involved in spermidine/putrescine import. Responsible for energy coupling to the transport system. This is Spermidine/putrescine import ATP-binding protein PotA from Pasteurella multocida (strain Pm70).